Here is a 274-residue protein sequence, read N- to C-terminus: MQQLQNIIETAFERRAEITPANADTVTREAVNQVIALLDSGALRVAEKIDGQWVTHQWLKKAVLLSFRINDNQVIEGAESRYFDKVPMKFANYDEARFQKEGFRVVPPAAVRQGAFIARNTVLMPSYVNIGAYVDEGTMVDTWATVGSCAQIGKNVHLSGGVGIGGVLEPLQANPTIIEDNCFIGARSEVVEGVIVEEGSVISMGVYIGQSTRIYDRETGEIHYGRVPAGSVVVSGNLPSKDGKYSLYCAVIVKKVDAKTRGKVGINELLRTID.

The substrate site is built by Arg104 and Asp141.

Belongs to the transferase hexapeptide repeat family. In terms of assembly, homotrimer.

The protein localises to the cytoplasm. It carries out the reaction (S)-2,3,4,5-tetrahydrodipicolinate + succinyl-CoA + H2O = (S)-2-succinylamino-6-oxoheptanedioate + CoA. Its pathway is amino-acid biosynthesis; L-lysine biosynthesis via DAP pathway; LL-2,6-diaminopimelate from (S)-tetrahydrodipicolinate (succinylase route): step 1/3. In Escherichia coli O127:H6 (strain E2348/69 / EPEC), this protein is 2,3,4,5-tetrahydropyridine-2,6-dicarboxylate N-succinyltransferase.